The chain runs to 465 residues: Citrate synthase-like protein (465 aa).

The interval 13–40 is disordered; sequence HISDMVDSTKMNGNQSQDTAGRADTPVS. Residues 21–31 show a composition bias toward polar residues; the sequence is TKMNGNQSQDT. Active-site residues include H357 and D413.

It belongs to the citrate synthase family.

It participates in secondary metabolite biosynthesis. Its function is as follows. Citrate synthase-like protein; part of the gene cluster that mediates the biosynthesis of squalestatin S1 (SQS1, also known as zaragozic acid A), a heavily oxidized fungal polyketide that offers potent cholesterol lowering activity by targeting squalene synthase (SS). SQS1 is composed of a 2,8-dioxobicyclic[3.2.1]octane-3,4,5-tricarboxyclic acid core that is connected to two lipophilic polyketide arms. These initial steps feature the priming of an unusual benzoic acid starter unit onto the highly reducing polyketide synthase pks2, followed by oxaloacetate extension and product release to generate a tricarboxylic acid containing product. The phenylalanine ammonia lyase (PAL) M7 and the acyl-CoA ligase M9 are involved in transforming phenylalanine into benzoyl-CoA. The citrate synthase-like protein R3 is involved in connecting the C-alpha-carbons of the hexaketide chain and oxaloacetate to afford the tricarboxylic acid unit. The potential hydrolytic enzymes, M8 and M10, are in close proximity to pks2 and may participate in product release. On the other side, the tetraketide arm is synthesized by a the squalestatin tetraketide synthase pks1 and enzymatically esterified to the core in the last biosynthetic step, by the acetyltransferase M4. The biosynthesis of the tetraketide must involve 3 rounds of chain extension. After the first and second rounds methyl-transfer occurs, and in all rounds of extension the ketoreductase and dehydratase are active. The enoyl reductase and C-MeT of pks1 are not active in the final round of extension. The acetyltransferase M4 appears to have a broad substrate selectivity for its acyl CoA substrate, allowing the in vitro synthesis of novel squalestatins. The biosynthesis of SQS1 requires several oxidative steps likely performed by oxidoreductases M1, R1 and R2. Finally, in support of the identification of the cluster as being responsible for SQS1 production, the cluster contains a gene encoding a putative squalene synthase (SS) R6, suggesting a likely mechanism for self-resistance. The polypeptide is Citrate synthase-like protein (Phoma sp. (strain ATCC 20986 / MF5453)).